Here is a 421-residue protein sequence, read N- to C-terminus: MDKLIITGGVRLDGEIRISGAKNSALPILAATLLADGPVTVQNLPHLHDITTMIELFGRMGIEPVIDEKLSVEIDPRTIKTLIAPYELVKTMRASILVLGPMVARFGEAEVALPGGCAIGSRPVDLHIRGLEAMGAIIDVEGGYIKAKAPEGGLRGAHFFFDTVSVTGTENIMMAASLANGRSVLENAAREPEVVDLANFLIAMGAKIHGAGTDTITIDGVKRLGSATYKVMPDRIETGTYLVAAAVTGGRVKVKDTDPTILEAVLLKLQEAGAEVTTGEDWIELNMHGKRPKAVNVRTAPYPAFPTDMQAQFISLNAIAEGTGAVIETIFENRFMHVYEMHRMGAQIQVEGNTAIVTGTEVLKGAPVMATDLRASASLVISALVAQGDTLIDRIYHIDRGYECIEEKLQMLGAKIRRVPG.

22 to 23 (KN) contributes to the phosphoenolpyruvate binding site. Residue R93 participates in UDP-N-acetyl-alpha-D-glucosamine binding. Catalysis depends on C117, which acts as the Proton donor. C117 is subject to 2-(S-cysteinyl)pyruvic acid O-phosphothioketal. UDP-N-acetyl-alpha-D-glucosamine contacts are provided by residues 122–126 (RPVDL), D308, and I330.

Belongs to the EPSP synthase family. MurA subfamily.

It localises to the cytoplasm. It catalyses the reaction phosphoenolpyruvate + UDP-N-acetyl-alpha-D-glucosamine = UDP-N-acetyl-3-O-(1-carboxyvinyl)-alpha-D-glucosamine + phosphate. The protein operates within cell wall biogenesis; peptidoglycan biosynthesis. Functionally, cell wall formation. Adds enolpyruvyl to UDP-N-acetylglucosamine. This chain is UDP-N-acetylglucosamine 1-carboxyvinyltransferase, found in Pseudomonas syringae pv. tomato (strain ATCC BAA-871 / DC3000).